The primary structure comprises 379 residues: Flagellin A (379 aa).

2 coiled-coil regions span residues 104-129 and 314-341; these read NSASERQALNEESVALQDELNRIAET and QNRLSHSISNLSNIQENVEASKSRIKDT.

It belongs to the bacterial flagellin family. As to quaternary structure, heteromer of multiple flagellin subunits including FlaA, FlaB, FlaC, FlaD and FlaE.

Its subcellular location is the secreted. It is found in the bacterial flagellum. Its function is as follows. Flagellin is the subunit protein which polymerizes to form the filaments of bacterial flagella. FlaA is required to form a core or scaffold into which the other flagellins are inserted to provide structural integrity. Essential for flagellar synthesis and motility; important for full virulence. The sequence is that of Flagellin A (flaA) from Vibrio cholerae serotype O1 (strain ATCC 39541 / Classical Ogawa 395 / O395).